We begin with the raw amino-acid sequence, 461 residues long: Probable ornithine decarboxylase (461 aa).

The segment at 1 to 35 (MTGTKRNGEEVVNENNNNNVAEETNKKAKVDESST) is disordered. Over residues 13–22 (NENNNNNVAE) the composition is skewed to low complexity. Basic and acidic residues predominate over residues 23–32 (ETNKKAKVDE). K116 carries the N6-(pyridoxal phosphate)lysine modification. Pyridoxal 5'-phosphate is bound by residues S247, G284, and 317-320 (EPGR). 375-376 (FD) serves as a coordination point for substrate. C402 serves as the catalytic Proton donor; shared with dimeric partner. D403 contacts substrate. Position 431 (Y431) interacts with pyridoxal 5'-phosphate.

Belongs to the Orn/Lys/Arg decarboxylase class-II family. In terms of assembly, homodimer. Only the dimer is catalytically active, as the active sites are constructed of residues from both monomers. Pyridoxal 5'-phosphate is required as a cofactor.

It carries out the reaction L-ornithine + H(+) = putrescine + CO2. The protein operates within amine and polyamine biosynthesis; putrescine biosynthesis via L-ornithine pathway; putrescine from L-ornithine: step 1/1. Its activity is regulated as follows. Inhibited by antizyme (AZ) in response to polyamine levels. AZ inhibits the assembly of the functional homodimer by binding to ODC monomers and targeting them for ubiquitin-independent proteolytic destruction by the 26S proteasome. Its function is as follows. Catalyzes the first and rate-limiting step of polyamine biosynthesis that converts ornithine into putrescine, which is the precursor for the polyamines, spermidine and spermine. Polyamines are essential for cell proliferation and are implicated in cellular processes, ranging from DNA replication to apoptosis. This chain is Probable ornithine decarboxylase (odc), found in Dictyostelium discoideum (Social amoeba).